The chain runs to 241 residues: Dihydropteridine reductase (241 aa).

11–35 (LVYGGRGALGSRCVQAFRARNWWVA) is an NADP(+) binding site. An N6-succinyllysine mark is found at lysine 70, lysine 76, lysine 93, and lysine 99. Tyrosine 147 acts as the Proton acceptor in catalysis. A Phosphoserine modification is found at serine 170.

Belongs to the short-chain dehydrogenases/reductases (SDR) family. In terms of assembly, homodimer.

It catalyses the reaction 5,6,7,8-tetrahydropteridine + NAD(+) = 6,7-dihydropteridine + NADH + H(+). The catalysed reaction is 5,6,7,8-tetrahydropteridine + NADP(+) = 6,7-dihydropteridine + NADPH + H(+). Its function is as follows. Catalyzes the conversion of quinonoid dihydrobiopterin into tetrahydrobiopterin. This chain is Dihydropteridine reductase (Qdpr), found in Rattus norvegicus (Rat).